We begin with the raw amino-acid sequence, 242 residues long: Type III pantothenate kinase (242 aa).

Position 7-14 (7-14) interacts with ATP; sequence DLGNSRFK. Substrate is bound by residues Tyr91 and 98 to 101; that span reads GVDR. The Proton acceptor role is filled by Asp100. An ATP-binding site is contributed by Thr121. Thr171 is a substrate binding site.

The protein belongs to the type III pantothenate kinase family. Homodimer. NH4(+) serves as cofactor. The cofactor is K(+).

It localises to the cytoplasm. The catalysed reaction is (R)-pantothenate + ATP = (R)-4'-phosphopantothenate + ADP + H(+). The protein operates within cofactor biosynthesis; coenzyme A biosynthesis; CoA from (R)-pantothenate: step 1/5. Functionally, catalyzes the phosphorylation of pantothenate (Pan), the first step in CoA biosynthesis. The protein is Type III pantothenate kinase of Xanthomonas campestris pv. campestris (strain 8004).